Here is a 127-residue protein sequence, read N- to C-terminus: Gamma-synuclein (127 aa).

Repeat copies occupy residues 20-30 and 31-41. Residues 20–67 are 4 X 11 AA tandem repeats of [EGSA]-K-T-K-[EQ]-[GQ]-V-X(4); that stretch reads EKTKQGVTEAAEKTKEGVMYVGAKTKEGVVQSVTSVAEKTKEQANAVS. The 3; approximate repeat unit spans residues 42 to 56; sequence AKTKEGVVQSVTSVA. Copy 4 of the repeat occupies 57–67; that stretch reads EKTKEQANAVS. Phosphoserine is present on residues Ser-67, Ser-72, and Ser-124. A disordered region spans residues 99-127; that stretch reads ALKQPVPSQEDEAAKAEEQVAEETKSGGD. The span at 110 to 127 shows a compositional bias: basic and acidic residues; sequence EAAKAEEQVAEETKSGGD.

Belongs to the synuclein family. As to quaternary structure, may be a centrosome-associated protein. Interacts with MYOC; affects its secretion and its aggregation. Post-translationally, phosphorylated by BARK1 and GRK5. As to expression, predominantly expressed in retina (predominantly in outer nuclear layer, also in inner segment of photoreceptor cells, some individual cells located in the inner nuclear layer, inner plexiform layer and in nerve fiber layer). Also found in brain and heart.

It is found in the cytoplasm. Its subcellular location is the perinuclear region. The protein resides in the cytoskeleton. The protein localises to the microtubule organizing center. It localises to the centrosome. It is found in the spindle. Plays a role in neurofilament network integrity. May be involved in modulating axonal architecture during development and in the adult. In vitro, increases the susceptibility of neurofilament-H to calcium-dependent proteases. May also function in modulating the keratin network in skin. Activates the MAPK and Elk-1 signal transduction pathway. The chain is Gamma-synuclein (SNCG) from Bos taurus (Bovine).